Consider the following 326-residue polypeptide: Putative GTPase CC_2483 (326 aa).

GTP contacts are provided by residues 61–69 (GVPGAGKST), Asp203, and 238–240 (SGL).

The protein belongs to the SIMIBI class G3E GTPase family. ArgK/MeaB subfamily.

Its function is as follows. May have GTPase activity. May also bind and hydrolyze ATP. May function as chaperone. The sequence is that of Putative GTPase CC_2483 from Caulobacter vibrioides (strain ATCC 19089 / CIP 103742 / CB 15) (Caulobacter crescentus).